A 316-amino-acid polypeptide reads, in one-letter code: 4-hydroxy-3-methylbut-2-enyl diphosphate reductase (316 aa).

C12 serves as a coordination point for [4Fe-4S] cluster. (2E)-4-hydroxy-3-methylbut-2-enyl diphosphate is bound by residues H41 and H74. Residues H41 and H74 each coordinate dimethylallyl diphosphate. 2 residues coordinate isopentenyl diphosphate: H41 and H74. A [4Fe-4S] cluster-binding site is contributed by C96. H124 contributes to the (2E)-4-hydroxy-3-methylbut-2-enyl diphosphate binding site. H124 contributes to the dimethylallyl diphosphate binding site. Position 124 (H124) interacts with isopentenyl diphosphate. Catalysis depends on E126, which acts as the Proton donor. T168 contacts (2E)-4-hydroxy-3-methylbut-2-enyl diphosphate. C198 contacts [4Fe-4S] cluster. The (2E)-4-hydroxy-3-methylbut-2-enyl diphosphate site is built by S226, S227, N228, and S270. Positions 226, 227, 228, and 270 each coordinate dimethylallyl diphosphate. Isopentenyl diphosphate contacts are provided by S226, S227, N228, and S270.

This sequence belongs to the IspH family. Requires [4Fe-4S] cluster as cofactor.

The enzyme catalyses isopentenyl diphosphate + 2 oxidized [2Fe-2S]-[ferredoxin] + H2O = (2E)-4-hydroxy-3-methylbut-2-enyl diphosphate + 2 reduced [2Fe-2S]-[ferredoxin] + 2 H(+). The catalysed reaction is dimethylallyl diphosphate + 2 oxidized [2Fe-2S]-[ferredoxin] + H2O = (2E)-4-hydroxy-3-methylbut-2-enyl diphosphate + 2 reduced [2Fe-2S]-[ferredoxin] + 2 H(+). It functions in the pathway isoprenoid biosynthesis; dimethylallyl diphosphate biosynthesis; dimethylallyl diphosphate from (2E)-4-hydroxy-3-methylbutenyl diphosphate: step 1/1. The protein operates within isoprenoid biosynthesis; isopentenyl diphosphate biosynthesis via DXP pathway; isopentenyl diphosphate from 1-deoxy-D-xylulose 5-phosphate: step 6/6. Its function is as follows. Catalyzes the conversion of 1-hydroxy-2-methyl-2-(E)-butenyl 4-diphosphate (HMBPP) into a mixture of isopentenyl diphosphate (IPP) and dimethylallyl diphosphate (DMAPP). Acts in the terminal step of the DOXP/MEP pathway for isoprenoid precursor biosynthesis. This chain is 4-hydroxy-3-methylbut-2-enyl diphosphate reductase, found in Marinobacter nauticus (strain ATCC 700491 / DSM 11845 / VT8) (Marinobacter aquaeolei).